We begin with the raw amino-acid sequence, 174 residues long: Peptide deformylase (174 aa).

Residues Cys96 and His138 each contribute to the Fe cation site. Glu139 is a catalytic residue. His142 lines the Fe cation pocket.

This sequence belongs to the polypeptide deformylase family. Requires Fe(2+) as cofactor.

It catalyses the reaction N-terminal N-formyl-L-methionyl-[peptide] + H2O = N-terminal L-methionyl-[peptide] + formate. Functionally, removes the formyl group from the N-terminal Met of newly synthesized proteins. Requires at least a dipeptide for an efficient rate of reaction. N-terminal L-methionine is a prerequisite for activity but the enzyme has broad specificity at other positions. This Helicobacter pylori (strain HPAG1) protein is Peptide deformylase.